A 233-amino-acid chain; its full sequence is Enolase-phosphatase E1 (233 aa).

2 residues coordinate Mg(2+): Asp-6 and Glu-8. Residues 128-129 (SS) and Lys-163 each bind substrate. Position 188 (Asp-188) interacts with Mg(2+).

Belongs to the HAD-like hydrolase superfamily. MasA/MtnC family. Monomer. Requires Mg(2+) as cofactor.

The protein localises to the cytoplasm. Its subcellular location is the nucleus. It carries out the reaction 5-methylsulfanyl-2,3-dioxopentyl phosphate + H2O = 1,2-dihydroxy-5-(methylsulfanyl)pent-1-en-3-one + phosphate. It functions in the pathway amino-acid biosynthesis; L-methionine biosynthesis via salvage pathway; L-methionine from S-methyl-5-thio-alpha-D-ribose 1-phosphate: step 3/6. It participates in amino-acid biosynthesis; L-methionine biosynthesis via salvage pathway; L-methionine from S-methyl-5-thio-alpha-D-ribose 1-phosphate: step 4/6. Its function is as follows. Bifunctional enzyme that catalyzes the enolization of 2,3-diketo-5-methylthiopentyl-1-phosphate (DK-MTP-1-P) into the intermediate 2-hydroxy-3-keto-5-methylthiopentenyl-1-phosphate (HK-MTPenyl-1-P), which is then dephosphorylated to form the acireductone 1,2-dihydroxy-3-keto-5-methylthiopentene (DHK-MTPene). The chain is Enolase-phosphatase E1 from Yarrowia lipolytica (strain CLIB 122 / E 150) (Yeast).